Here is a 270-residue protein sequence, read N- to C-terminus: Tryptophan 2,3-dioxygenase-like protein (270 aa).

Belongs to the tryptophan 2,3-dioxygenase family.

The sequence is that of Tryptophan 2,3-dioxygenase-like protein from Xanthomonas campestris pv. campestris (strain 8004).